The chain runs to 286 residues: Putative sugar uptake protein lin0215 (286 aa).

The next 8 helical transmembrane spans lie at 4 to 26 (MIALIPALLWGTVPLIITKFGGS), 33 to 55 (GMTLGALTFAVIVFFFTDPVYTL), 114 to 136 (LRIILGFIALALIVGGIFLTSYA), 149 to 167 (GLITLVISSLGYVGLVVLI), 177 to 194 (AILPQAIGMVLSALIMTH), 207 to 226 (LLLIIPGMIWAAGNVAMVHA), 230 to 252 (VGVATGFSLSQLGVVISTIGGIV), and 264 to 283 (LYVIVGVVLVVLGGILIGVA).

Belongs to the GRP transporter (TC 2.A.7.5) family.

The protein localises to the cell membrane. The sequence is that of Putative sugar uptake protein lin0215 from Listeria innocua serovar 6a (strain ATCC BAA-680 / CLIP 11262).